Reading from the N-terminus, the 359-residue chain is MRKIIHIDMDCYFAAVEMRDFPELRGKPIAVGGRSDRRGVISTCSYEARKFGVRSAMSSYHALQLCPQLILVPGRMEVYKSVSLQIREIFHRYTDLVEPLSLDEAYLDVTDCDAHQGSATLIAKTIRDEIFEVTGLTASAGIAPIKFLAKIASDLNKPNGQYVITPNQIADFVKDLPLSKIPGVGKVTSKKLADIGLTTCYDVQQYPKVQLIEAFGKFGHVLAERAQGIDSRQISPHRVRKSVGVETTLAKDIFTLEQCHQVLPQLIQELSTRVRRSAKDRQIHKQVVKLKFNDFKQTTIEHRSDEISINLFHELLLQALQRSQGRGIRLVGVSVGLADVTLASSESSVDQITQLDLQF.

Positions 4 to 185 (IIHIDMDCYF…LPLSKIPGVG (182 aa)) constitute a UmuC domain. Residues aspartate 8 and aspartate 103 each contribute to the Mg(2+) site. The active site involves glutamate 104.

Belongs to the DNA polymerase type-Y family. In terms of assembly, monomer. It depends on Mg(2+) as a cofactor.

It is found in the cytoplasm. The enzyme catalyses DNA(n) + a 2'-deoxyribonucleoside 5'-triphosphate = DNA(n+1) + diphosphate. Its function is as follows. Poorly processive, error-prone DNA polymerase involved in untargeted mutagenesis. Copies undamaged DNA at stalled replication forks, which arise in vivo from mismatched or misaligned primer ends. These misaligned primers can be extended by PolIV. Exhibits no 3'-5' exonuclease (proofreading) activity. May be involved in translesional synthesis, in conjunction with the beta clamp from PolIII. This is DNA polymerase IV from Shewanella frigidimarina (strain NCIMB 400).